Consider the following 342-residue polypeptide: tRNA (guanine(26)-N(2))-dimethyltransferase (342 aa).

The Trm1 methyltransferase domain maps to 1–336 (MRITEGSAVI…CPYAEVSEIL (336 aa)). Residues Arg-35, Arg-60, and Glu-76 each contribute to the S-adenosyl-L-methionine site.

The protein belongs to the class I-like SAM-binding methyltransferase superfamily. Trm1 family.

The enzyme catalyses guanosine(26) in tRNA + 2 S-adenosyl-L-methionine = N(2)-dimethylguanosine(26) in tRNA + 2 S-adenosyl-L-homocysteine + 2 H(+). Functionally, dimethylates a single guanine residue at position 26 of a number of tRNAs using S-adenosyl-L-methionine as donor of the methyl groups. In Thermoplasma volcanium (strain ATCC 51530 / DSM 4299 / JCM 9571 / NBRC 15438 / GSS1), this protein is tRNA (guanine(26)-N(2))-dimethyltransferase.